The primary structure comprises 530 residues: Per os infectivity factor 1 (530 aa).

A signal peptide spans 1 to 15; it reads MHFAIILLFLLVIIA.

As to quaternary structure, forms the PIF complex together with PIF2 and PIF3. The complex also interacts with per os infectivity factor PIF0.

Its subcellular location is the virion membrane. Its function is as follows. Per os infectivity factor that mediates the specific binding of occluded virions (ODV) to the host midgut target cells. The protein is Per os infectivity factor 1 of Autographa californica nuclear polyhedrosis virus (AcMNPV).